The sequence spans 59 residues: DNA gyrase inhibitor YacG (59 aa).

The Zn(2+) site is built by C7, C10, C25, and C29.

It belongs to the DNA gyrase inhibitor YacG family. As to quaternary structure, interacts with GyrB. Requires Zn(2+) as cofactor.

Functionally, inhibits all the catalytic activities of DNA gyrase by preventing its interaction with DNA. Acts by binding directly to the C-terminal domain of GyrB, which probably disrupts DNA binding by the gyrase. The sequence is that of DNA gyrase inhibitor YacG from Geobacter sulfurreducens (strain ATCC 51573 / DSM 12127 / PCA).